A 437-amino-acid chain; its full sequence is GTPase Der (437 aa).

2 consecutive EngA-type G domains span residues 3-168 (PLIA…PETE) and 178-353 (IQLA…QNRS). GTP contacts are provided by residues 9 to 16 (GRPNVGKS), 56 to 60 (DTGGY), 120 to 123 (NKVE), 184 to 191 (GRPNVGKS), 231 to 235 (DTAGL), and 296 to 299 (NKWD). The KH-like domain occupies 354–437 (RKISTSVLNK…VPISMRFMQK (84 aa)).

This sequence belongs to the TRAFAC class TrmE-Era-EngA-EngB-Septin-like GTPase superfamily. EngA (Der) GTPase family. In terms of assembly, associates with the 50S ribosomal subunit.

Its function is as follows. GTPase that plays an essential role in the late steps of ribosome biogenesis. This chain is GTPase Der, found in Pelodictyon phaeoclathratiforme (strain DSM 5477 / BU-1).